Reading from the N-terminus, the 318-residue chain is MPENLEIRPSSFENFIGQKKLVETLQILISSSQKRKQSLDHILFYGPPGTGKTTLANIVANVLEAKIKYVQGPLLEKKSDVLAVLANISPDTIIFIDEIHGINKNIEELLYSAMEEFVIDLQIGVDGERKIMRMKLPQFTLIGASTKLAQISTPLQNRFGYVAKIVDYTLEDMIQIIRNSSAVLKLKMNTEIIKYIASFSNNTPRIANNLLKRIRDFALVLNAKRIDKDIVNKTFDSIGIYNQGLSQINIEYLNLLVKIFKGKSVALDVIANVLKEHRQTIINIIEPPLIEKELIEKTSRGRRITKKGRDYLLELKTN.

The tract at residues 1–168 (MPENLEIRPS…FGYVAKIVDY (168 aa)) is large ATPase domain (RuvB-L). Residues Ile7, Arg8, Gly49, Lys52, Thr53, Thr54, Arg158, Tyr168, and Arg205 each coordinate ATP. Mg(2+) is bound at residue Thr53. The tract at residues 169–239 (TLEDMIQIIR…IVNKTFDSIG (71 aa)) is small ATPAse domain (RuvB-S). The head domain (RuvB-H) stretch occupies residues 242 to 318 (NQGLSQINIE…RDYLLELKTN (77 aa)). Residues Arg278, Lys297, and Arg302 each coordinate DNA.

Belongs to the RuvB family. As to quaternary structure, homohexamer. Forms an RuvA(8)-RuvB(12)-Holliday junction (HJ) complex. HJ DNA is sandwiched between 2 RuvA tetramers; dsDNA enters through RuvA and exits via RuvB. An RuvB hexamer assembles on each DNA strand where it exits the tetramer. Each RuvB hexamer is contacted by two RuvA subunits (via domain III) on 2 adjacent RuvB subunits; this complex drives branch migration. In the full resolvosome a probable DNA-RuvA(4)-RuvB(12)-RuvC(2) complex forms which resolves the HJ.

Its subcellular location is the cytoplasm. It carries out the reaction ATP + H2O = ADP + phosphate + H(+). In terms of biological role, the RuvA-RuvB-RuvC complex processes Holliday junction (HJ) DNA during genetic recombination and DNA repair, while the RuvA-RuvB complex plays an important role in the rescue of blocked DNA replication forks via replication fork reversal (RFR). RuvA specifically binds to HJ cruciform DNA, conferring on it an open structure. The RuvB hexamer acts as an ATP-dependent pump, pulling dsDNA into and through the RuvAB complex. RuvB forms 2 homohexamers on either side of HJ DNA bound by 1 or 2 RuvA tetramers; 4 subunits per hexamer contact DNA at a time. Coordinated motions by a converter formed by DNA-disengaged RuvB subunits stimulates ATP hydrolysis and nucleotide exchange. Immobilization of the converter enables RuvB to convert the ATP-contained energy into a lever motion, pulling 2 nucleotides of DNA out of the RuvA tetramer per ATP hydrolyzed, thus driving DNA branch migration. The RuvB motors rotate together with the DNA substrate, which together with the progressing nucleotide cycle form the mechanistic basis for DNA recombination by continuous HJ branch migration. Branch migration allows RuvC to scan DNA until it finds its consensus sequence, where it cleaves and resolves cruciform DNA. The protein is Holliday junction branch migration complex subunit RuvB of Mesomycoplasma hyopneumoniae (strain 232) (Mycoplasma hyopneumoniae).